Reading from the N-terminus, the 659-residue chain is Acetyl-coenzyme A synthetase (659 aa).

Residues 206-209 and Thr-324 each bind CoA; that span reads RRGK. ATP-binding positions include 400-402, 424-429, Asp-516, Arg-531, and Arg-542; these read GEP and DTWWQT. Residues Val-553 and His-555 each contribute to the Mg(2+) site. Arg-600 contacts CoA.

The protein belongs to the ATP-dependent AMP-binding enzyme family. Requires Mg(2+) as cofactor.

The enzyme catalyses acetate + ATP + CoA = acetyl-CoA + AMP + diphosphate. Functionally, catalyzes the conversion of acetate into acetyl-CoA (AcCoA), an essential intermediate at the junction of anabolic and catabolic pathways. AcsA undergoes a two-step reaction. In the first half reaction, AcsA combines acetate with ATP to form acetyl-adenylate (AcAMP) intermediate. In the second half reaction, it can then transfer the acetyl group from AcAMP to the sulfhydryl group of CoA, forming the product AcCoA. This Methanothrix thermoacetophila (strain DSM 6194 / JCM 14653 / NBRC 101360 / PT) (Methanosaeta thermophila) protein is Acetyl-coenzyme A synthetase (acsA).